Reading from the N-terminus, the 398-residue chain is Protein ELC (398 aa).

One can recognise a UEV domain in the interval 18–162 (ALSQRGPSSV…ARDPPLYSRR (145 aa)). The interval 157–202 (PLYSRRRPQPPPPSPPTVYDSSLSRPPSADQSLPRPFPPSPYGGGV) is disordered. The segment covering 175-187 (YDSSLSRPPSADQ) has biased composition (polar residues). A coiled-coil region spans residues 247–291 (EAEAEELLSLQAGLKRREDELNIGLKEMVEEKETLEQQLQIISMN). In terms of domain architecture, SB spans 322-390 (DTLSKQMLEC…RAAQMEVQVA (69 aa)).

Belongs to the ubiquitin-conjugating enzyme family. UEV subfamily. As to quaternary structure, component of the endosomal sorting required for transport complex I (ESCRT-I), composed of ELC, VPS28 and VPS37. Interacts with VPS28 and VPS37. Binds ubiquitin in vitro. Interacts with FREE1. Interacts with TOL9/TOM1D. Interacts with BRO1/ALIX. Interacts with SINAT1, SINAT2, SINAT3 and SINAT4. Ubiquitinated by SINAT1, SINAT2, SINAT3 and SINAT4 for subsequent proteasomal degradation. Expressed in roots, stems, leaves and flowers.

It localises to the early endosome. The protein resides in the late endosome. It is found in the prevacuolar compartment. Its function is as follows. Component of the ESCRT-I complex (endosomal sorting complex required for transport I), a regulator of vesicular trafficking process. Required for the sorting of endocytic ubiquitinated cargos into multivesicular bodies (MVBs). May control nuclear division through the microtubule cytoskeleton. This chain is Protein ELC, found in Arabidopsis thaliana (Mouse-ear cress).